The sequence spans 169 residues: MNVDFIAGINNLGEKIYTCEPFKTSFQNPFIVALIITAVVLVVFFAICNPPVDKKRKTKTAIYVYICIVALLFLHYYVLNHQLNDIYNKSNMDVIVSSIHDKYKGGDEIIPPISPPSVSNELEEDQPKKIPAGPKPAGPKPADSKPASSADSKPLVPLQEVIMPSQYNN.

A run of 2 helical transmembrane segments spans residues 28-48 (NPFIVALIITAVVLVVFFAIC) and 60-80 (TAIYVYICIVALLFLHYYVLN). A glycan (N-linked (GlcNAc...) asparagine; by host) is linked at Asn88. The disordered stretch occupies residues 107 to 169 (DEIIPPISPP…EVIMPSQYNN (63 aa)). Positions 140–154 (KPADSKPASSADSKP) are enriched in low complexity.

The protein belongs to the asfivirus B169L family.

Its subcellular location is the host membrane. It is found in the virion. This chain is Transmembrane protein B169L, found in Ornithodoros (relapsing fever ticks).